We begin with the raw amino-acid sequence, 475 residues long: Ribulose bisphosphate carboxylase large chain (475 aa).

The propeptide occupies 1 to 2 (MS). N-acetylproline is present on Pro-3. Lys-14 carries the post-translational modification N6,N6,N6-trimethyllysine. Asn-123 and Thr-173 together coordinate substrate. Lys-175 serves as the catalytic Proton acceptor. Residue Lys-177 coordinates substrate. The Mg(2+) site is built by Lys-201, Asp-203, and Glu-204. Position 201 is an N6-carboxylysine (Lys-201). His-294 (proton acceptor) is an active-site residue. The substrate site is built by Arg-295, His-327, and Ser-379.

The protein belongs to the RuBisCO large chain family. Type I subfamily. In terms of assembly, heterohexadecamer of 8 large chains and 8 small chains; disulfide-linked. The disulfide link is formed within the large subunit homodimers. Mg(2+) serves as cofactor. The disulfide bond which can form in the large chain dimeric partners within the hexadecamer appears to be associated with oxidative stress and protein turnover.

The protein resides in the plastid. Its subcellular location is the chloroplast. The enzyme catalyses 2 (2R)-3-phosphoglycerate + 2 H(+) = D-ribulose 1,5-bisphosphate + CO2 + H2O. The catalysed reaction is D-ribulose 1,5-bisphosphate + O2 = 2-phosphoglycolate + (2R)-3-phosphoglycerate + 2 H(+). Functionally, ruBisCO catalyzes two reactions: the carboxylation of D-ribulose 1,5-bisphosphate, the primary event in carbon dioxide fixation, as well as the oxidative fragmentation of the pentose substrate in the photorespiration process. Both reactions occur simultaneously and in competition at the same active site. The polypeptide is Ribulose bisphosphate carboxylase large chain (Keteleeria davidiana (David's keteleeria)).